Consider the following 355-residue polypeptide: UDP-N-acetylglucosamine--N-acetylmuramyl-(pentapeptide) pyrophosphoryl-undecaprenol N-acetylglucosamine transferase (355 aa).

Residues 13-15 (TGG), Asn125, Arg162, Ser190, Ile244, and Gln289 contribute to the UDP-N-acetyl-alpha-D-glucosamine site.

It belongs to the glycosyltransferase 28 family. MurG subfamily.

It is found in the cell inner membrane. The catalysed reaction is di-trans,octa-cis-undecaprenyl diphospho-N-acetyl-alpha-D-muramoyl-L-alanyl-D-glutamyl-meso-2,6-diaminopimeloyl-D-alanyl-D-alanine + UDP-N-acetyl-alpha-D-glucosamine = di-trans,octa-cis-undecaprenyl diphospho-[N-acetyl-alpha-D-glucosaminyl-(1-&gt;4)]-N-acetyl-alpha-D-muramoyl-L-alanyl-D-glutamyl-meso-2,6-diaminopimeloyl-D-alanyl-D-alanine + UDP + H(+). It participates in cell wall biogenesis; peptidoglycan biosynthesis. Its function is as follows. Cell wall formation. Catalyzes the transfer of a GlcNAc subunit on undecaprenyl-pyrophosphoryl-MurNAc-pentapeptide (lipid intermediate I) to form undecaprenyl-pyrophosphoryl-MurNAc-(pentapeptide)GlcNAc (lipid intermediate II). The protein is UDP-N-acetylglucosamine--N-acetylmuramyl-(pentapeptide) pyrophosphoryl-undecaprenol N-acetylglucosamine transferase of Neisseria meningitidis serogroup B (strain ATCC BAA-335 / MC58).